The following is a 1044-amino-acid chain: Carbamoyl phosphate synthase large chain (1044 aa).

A carboxyphosphate synthetic domain region spans residues 1–398 (MPKREDISKI…ALMKAIASLD (398 aa)). ATP contacts are provided by Arg129, Arg169, Gly175, Gly176, Arg208, Leu210, Glu215, Gly241, Val242, His243, Gln284, and Glu296. Residues 133–325 (HDFLISIGER…IARIAAKIAV (193 aa)) form the ATP-grasp 1 domain. Residues Gln284, Glu296, and Asn298 each coordinate Mg(2+). Gln284, Glu296, and Asn298 together coordinate Mn(2+). Positions 399 to 539 (IDLSYRLRLY…YSTYEDEDEL (141 aa)) are oligomerization domain. A carbamoyl phosphate synthetic domain region spans residues 540 to 916 (PGISGFVAII…AIRKSILRDI (377 aa)). One can recognise an ATP-grasp 2 domain in the interval 665-854 (SKRLEAMGID…WVELAVSAIM (190 aa)). 10 residues coordinate ATP: Arg701, Lys738, Leu740, Glu745, Gly770, Val771, His772, Ser773, Gln813, and Glu825. Gln813, Glu825, and Asn827 together coordinate Mg(2+). Residues Gln813, Glu825, and Asn827 each coordinate Mn(2+). The MGS-like domain maps to 911-1044 (SILRDIKSVF…IDYREISSYH (134 aa)). The segment at 916-1044 (IKSVFISVRD…IDYREISSYH (129 aa)) is allosteric domain.

The protein belongs to the CarB family. In terms of assembly, composed of two chains; the small (or glutamine) chain promotes the hydrolysis of glutamine to ammonia, which is used by the large (or ammonia) chain to synthesize carbamoyl phosphate. Tetramer of heterodimers (alpha,beta)4. Requires Mg(2+) as cofactor. Mn(2+) is required as a cofactor.

The catalysed reaction is hydrogencarbonate + L-glutamine + 2 ATP + H2O = carbamoyl phosphate + L-glutamate + 2 ADP + phosphate + 2 H(+). It catalyses the reaction hydrogencarbonate + NH4(+) + 2 ATP = carbamoyl phosphate + 2 ADP + phosphate + 2 H(+). The protein operates within amino-acid biosynthesis; L-arginine biosynthesis; carbamoyl phosphate from bicarbonate: step 1/1. It participates in pyrimidine metabolism; UMP biosynthesis via de novo pathway; (S)-dihydroorotate from bicarbonate: step 1/3. In terms of biological role, large subunit of the glutamine-dependent carbamoyl phosphate synthetase (CPSase). CPSase catalyzes the formation of carbamoyl phosphate from the ammonia moiety of glutamine, carbonate, and phosphate donated by ATP, constituting the first step of 2 biosynthetic pathways, one leading to arginine and/or urea and the other to pyrimidine nucleotides. The large subunit (synthetase) binds the substrates ammonia (free or transferred from glutamine from the small subunit), hydrogencarbonate and ATP and carries out an ATP-coupled ligase reaction, activating hydrogencarbonate by forming carboxy phosphate which reacts with ammonia to form carbamoyl phosphate. This chain is Carbamoyl phosphate synthase large chain, found in Thermoplasma volcanium (strain ATCC 51530 / DSM 4299 / JCM 9571 / NBRC 15438 / GSS1).